The following is a 581-amino-acid chain: Activating signal cointegrator 1 (581 aa).

N-acetylalanine is present on alanine 2. The tract at residues 97–118 is disordered; sequence KSGDHLKRGRKKGRNRQEVPAF. Residues 171–187 form a C4-type zinc finger; it reads CDCLGQKHKLINNCLIC. A mediates interaction with DDRGK1 region spans residues 200–300; that stretch reads CLFCGTLVCT…ASDSNQWLSK (101 aa). Phosphoserine is present on serine 276. Residue tyrosine 289 is modified to Phosphotyrosine. The mediates interaction with UFL1 stretch occupies residues 300–400; sequence KLERETLQKR…WVDHTGAASQ (101 aa). Glycyl lysine isopeptide (Lys-Gly) (interchain with G-Cter in UFM1) cross-links involve residues lysine 324, lysine 325, and lysine 334. Serine 341 bears the Phosphoserine mark. A Glycyl lysine isopeptide (Lys-Gly) (interchain with G-Cter in UFM1) cross-link involves residue lysine 367. The 95-residue stretch at 437–531 folds into the ASCH domain; sequence LSVHQPWASL…FKEQFPDISQ (95 aa).

As to quaternary structure, interacts with the thyroid hormone receptor/TR (via the ligand-binding domain); this interaction requires the presence of thyroid hormone. Interacts with the androgen receptor/AR; in an androgen, testosterone and dihydrotestosterone-dependent manner. Interacts with ESR1 (estrogen ligand-bound); competes with UFSP2. Interacts with UFSP2; competes with ligand-bound ESR1. Interacts with DDRGK1 and UFL1; the interaction with DDRGK1 is direct. Interacts with NCOA1. Interacts with EP300. Part of the ASC-1 complex, that contains TRIP4, ASCC1, ASCC2 and ASCC3. Identified in the RQT (ribosome quality control trigger) complex, that contains ASCC2, ASCC3 and TRIP4. Interacts with NEK6. Interacts with CSRP1. Interacts with ZCCHC4. Post-translationally, phosphorylated by NEK6. In terms of processing, polyufmylated by the UFM1-conjugating system composed of the enzymes UBA5, UFC1 and UFL1. Deufmylated by the protease UFSP2. Ufmylation of TRIP4 is promoted by ligand-bound nuclear receptors that compete with UFSP2 for interaction with TRIP4. Nuclear receptors-induced ufmylation promotes the recruitment of additional transcriptional coactivators like EP300 and NCOA1 and therefore the assembly of a coactivator complex facilitating nuclear receptor-mediated transcription.

It is found in the nucleus. The protein resides in the cytoplasm. It localises to the cytosol. The protein localises to the cytoskeleton. Its subcellular location is the microtubule organizing center. It is found in the centrosome. Transcription coactivator which associates with nuclear receptors, transcriptional coactivators including EP300, CREBBP and NCOA1, and basal transcription factors like TBP and TFIIA to facilitate nuclear receptors-mediated transcription. May thereby play an important role in establishing distinct coactivator complexes under different cellular conditions. Plays a role in thyroid hormone receptor and estrogen receptor transactivation. Also involved in androgen receptor transactivation. Plays a pivotal role in the transactivation of NF-kappa-B, SRF and AP1. Acts as a mediator of transrepression between nuclear receptor and either AP1 or NF-kappa-B. May play a role in the development of neuromuscular junction. May play a role in late myogenic differentiation. Also functions as part of the RQC trigger (RQT) complex that activates the ribosome quality control (RQC) pathway, a pathway that degrades nascent peptide chains during problematic translation. The sequence is that of Activating signal cointegrator 1 from Homo sapiens (Human).